We begin with the raw amino-acid sequence, 719 residues long: Calpain-12 (719 aa).

Residues 45-341 form the Calpain catalytic domain; that stretch reads LFRDPYFPAG…FDTVQICSLS (297 aa). Catalysis depends on residues Cys105, His259, and Asn283. The interval 342–540 is domain III; that stretch reads PEVLGPSPEG…DDVISADLQS (199 aa). Residues 393 to 402 are compositionally biased toward acidic residues; sequence DEEDDEDEEG. Residues 393 to 418 are disordered; sequence DEEDDEDEEGPWGGWGAAGARGPARG. The domain IV stretch occupies residues 541–719; the sequence is LQGPYLPLEL…RQWMEVATFS (179 aa). The 36-residue stretch at 620–655 folds into the EF-hand domain; sequence GYLLEWQAIFNKFDEDTSGTMNSYELRLALNAAGFH. Ca(2+) contacts are provided by Asp633, Asp635, Ser637, Thr639, and Glu644.

Belongs to the peptidase C2 family.

Functionally, calcium-regulated non-lysosomal thiol-protease. The chain is Calpain-12 (CAPN12) from Homo sapiens (Human).